Here is a 309-residue protein sequence, read N- to C-terminus: Homoserine kinase (309 aa).

88–98 serves as a coordination point for ATP; the sequence is PLARGLGSSAA.

This sequence belongs to the GHMP kinase family. Homoserine kinase subfamily.

It localises to the cytoplasm. The catalysed reaction is L-homoserine + ATP = O-phospho-L-homoserine + ADP + H(+). It participates in amino-acid biosynthesis; L-threonine biosynthesis; L-threonine from L-aspartate: step 4/5. Functionally, catalyzes the ATP-dependent phosphorylation of L-homoserine to L-homoserine phosphate. This Halalkalibacterium halodurans (strain ATCC BAA-125 / DSM 18197 / FERM 7344 / JCM 9153 / C-125) (Bacillus halodurans) protein is Homoserine kinase.